Reading from the N-terminus, the 341-residue chain is HTH-type transcriptional repressor PurR (341 aa).

The HTH lacI-type domain occupies 2-56 (ATIKDVAKRANVSTTTVSHVINKTRFVAEETRNAVWAAIKELHYSPSAVARSLKV). The H-T-H motif DNA-binding region spans 4 to 23 (IKDVAKRANVSTTTVSHVIN). The DNA-binding element occupies 48 to 56 (SAVARSLKV). Hypoxanthine contacts are provided by Tyr73, Arg190, Thr192, Phe221, and Asp275.

Homodimer.

The protein operates within purine metabolism; purine nucleotide biosynthesis [regulation]. Is the main repressor of the genes involved in the de novo synthesis of purine nucleotides, regulating purB, purC, purEK, purF, purHD, purL, purMN and guaBA expression. PurR is allosterically activated to bind its cognate DNA by binding the purine corepressors, hypoxanthine or guanine, thereby effecting transcription repression. The sequence is that of HTH-type transcriptional repressor PurR from Salmonella typhimurium (strain LT2 / SGSC1412 / ATCC 700720).